Reading from the N-terminus, the 250-residue chain is Uracil-DNA glycosylase (250 aa).

Asp78 functions as the Proton acceptor in the catalytic mechanism. A disordered region spans residues 228-250; sequence RGQKPVDWSGEQNNASRQGEFAL.

The protein belongs to the uracil-DNA glycosylase (UDG) superfamily. UNG family.

The protein localises to the cytoplasm. It carries out the reaction Hydrolyzes single-stranded DNA or mismatched double-stranded DNA and polynucleotides, releasing free uracil.. Its function is as follows. Excises uracil residues from the DNA which can arise as a result of misincorporation of dUMP residues by DNA polymerase or due to deamination of cytosine. This is Uracil-DNA glycosylase from Bordetella pertussis (strain Tohama I / ATCC BAA-589 / NCTC 13251).